The chain runs to 22 residues: thr operon leader peptide (22 aa).

This sequence belongs to the thr operon leader peptide family.

Functionally, this protein is involved in control of the biosynthesis of threonine. The chain is thr operon leader peptide from Yersinia enterocolitica serotype O:8 / biotype 1B (strain NCTC 13174 / 8081).